A 202-amino-acid polypeptide reads, in one-letter code: Large ribosomal subunit protein uL4 (202 aa).

Residues 40-71 (GRQGSKAQKTRSQVSGGGKKPWRQKGSGRARA) are disordered. Residues 44–53 (SKAQKTRSQV) are compositionally biased toward polar residues.

This sequence belongs to the universal ribosomal protein uL4 family. Part of the 50S ribosomal subunit.

One of the primary rRNA binding proteins, this protein initially binds near the 5'-end of the 23S rRNA. It is important during the early stages of 50S assembly. It makes multiple contacts with different domains of the 23S rRNA in the assembled 50S subunit and ribosome. In terms of biological role, forms part of the polypeptide exit tunnel. The chain is Large ribosomal subunit protein uL4 from Hahella chejuensis (strain KCTC 2396).